The sequence spans 111 residues: Nucleoid-associated protein Tmel_0542 (111 aa).

It belongs to the YbaB/EbfC family. Homodimer.

The protein resides in the cytoplasm. It localises to the nucleoid. Its function is as follows. Binds to DNA and alters its conformation. May be involved in regulation of gene expression, nucleoid organization and DNA protection. The sequence is that of Nucleoid-associated protein Tmel_0542 from Thermosipho melanesiensis (strain DSM 12029 / CIP 104789 / BI429).